The following is a 346-amino-acid chain: DNA primase small subunit PriS (346 aa).

Catalysis depends on residues Asp97, Asp99, and Asp280.

Belongs to the eukaryotic-type primase small subunit family. In terms of assembly, heterodimer of a small subunit (PriS) and a large subunit (PriL). Mg(2+) is required as a cofactor. It depends on Mn(2+) as a cofactor.

Functionally, catalytic subunit of DNA primase, an RNA polymerase that catalyzes the synthesis of short RNA molecules used as primers for DNA polymerase during DNA replication. The small subunit contains the primase catalytic core and has DNA synthesis activity on its own. Binding to the large subunit stabilizes and modulates the activity, increasing the rate of DNA synthesis while decreasing the length of the DNA fragments, and conferring RNA synthesis capability. The DNA polymerase activity may enable DNA primase to also catalyze primer extension after primer synthesis. May also play a role in DNA repair. This chain is DNA primase small subunit PriS, found in Thermococcus kodakarensis (strain ATCC BAA-918 / JCM 12380 / KOD1) (Pyrococcus kodakaraensis (strain KOD1)).